The chain runs to 193 residues: Acyl carrier protein phosphodiesterase (193 aa).

This sequence belongs to the AcpH family.

It carries out the reaction holo-[ACP] + H2O = apo-[ACP] + (R)-4'-phosphopantetheine + H(+). Functionally, converts holo-ACP to apo-ACP by hydrolytic cleavage of the phosphopantetheine prosthetic group from ACP. The protein is Acyl carrier protein phosphodiesterase of Escherichia coli O7:K1 (strain IAI39 / ExPEC).